Consider the following 211-residue polypeptide: Ribonuclease HII (211 aa).

The RNase H type-2 domain maps to 24–211 (QLIAGVDEVG…KPVKKALGLD (188 aa)). A divalent metal cation-binding residues include Asp30, Glu31, and Asp122.

Belongs to the RNase HII family. Mn(2+) is required as a cofactor. It depends on Mg(2+) as a cofactor.

It localises to the cytoplasm. It carries out the reaction Endonucleolytic cleavage to 5'-phosphomonoester.. Endonuclease that specifically degrades the RNA of RNA-DNA hybrids. This is Ribonuclease HII from Vibrio parahaemolyticus serotype O3:K6 (strain RIMD 2210633).